Here is a 353-residue protein sequence, read N- to C-terminus: Photosystem II D2 protein (353 aa).

Threonine 2 carries the post-translational modification N-acetylthreonine. Threonine 2 is subject to Phosphothreonine. Residues 41 to 61 form a helical membrane-spanning segment; that stretch reads CAYFAIGGWFTGTTFVTSWYT. Position 118 (histidine 118) interacts with chlorophyll a. Residues 125–141 form a helical membrane-spanning segment; the sequence is GFMLRQFELARSVQLRP. Pheophytin a is bound by residues glutamine 130 and asparagine 143. A helical transmembrane segment spans residues 153–166; it reads VFVSVFLIYPLGQS. Chlorophyll a is bound at residue histidine 198. Residues 208 to 228 form a helical membrane-spanning segment; sequence AALLCAIHGATVENTLFEDGD. Residues histidine 215 and phenylalanine 262 each contribute to the a plastoquinone site. Histidine 215 serves as a coordination point for Fe cation. Fe cation is bound at residue histidine 269. A helical membrane pass occupies residues 279-295; it reads GLWMSALGVVGLALNLR.

This sequence belongs to the reaction center PufL/M/PsbA/D family. PSII is composed of 1 copy each of membrane proteins PsbA, PsbB, PsbC, PsbD, PsbE, PsbF, PsbH, PsbI, PsbJ, PsbK, PsbL, PsbM, PsbT, PsbX, PsbY, PsbZ, Psb30/Ycf12, at least 3 peripheral proteins of the oxygen-evolving complex and a large number of cofactors. It forms dimeric complexes. It depends on The D1/D2 heterodimer binds P680, chlorophylls that are the primary electron donor of PSII, and subsequent electron acceptors. It shares a non-heme iron and each subunit binds pheophytin, quinone, additional chlorophylls, carotenoids and lipids. There is also a Cl(-1) ion associated with D1 and D2, which is required for oxygen evolution. The PSII complex binds additional chlorophylls, carotenoids and specific lipids. as a cofactor.

The protein localises to the plastid. Its subcellular location is the chloroplast thylakoid membrane. The enzyme catalyses 2 a plastoquinone + 4 hnu + 2 H2O = 2 a plastoquinol + O2. Its function is as follows. Photosystem II (PSII) is a light-driven water:plastoquinone oxidoreductase that uses light energy to abstract electrons from H(2)O, generating O(2) and a proton gradient subsequently used for ATP formation. It consists of a core antenna complex that captures photons, and an electron transfer chain that converts photonic excitation into a charge separation. The D1/D2 (PsbA/PsbD) reaction center heterodimer binds P680, the primary electron donor of PSII as well as several subsequent electron acceptors. D2 is needed for assembly of a stable PSII complex. The polypeptide is Photosystem II D2 protein (Carica papaya (Papaya)).